The sequence spans 719 residues: Phosphoribosylformylglycinamidine synthase subunit PurL (719 aa).

The active site involves histidine 45. ATP is bound by residues tyrosine 48 and lysine 87. Residue glutamate 89 participates in Mg(2+) binding. Residues 90-93 (SHNH) and arginine 112 each bind substrate. Residue histidine 91 is the Proton acceptor of the active site. Position 113 (aspartate 113) interacts with Mg(2+). Glutamine 236 contributes to the substrate binding site. Residue aspartate 264 coordinates Mg(2+). 308 to 310 (ESQ) serves as a coordination point for substrate. Positions 493 and 530 each coordinate ATP. Residue asparagine 531 participates in Mg(2+) binding. Serine 533 provides a ligand contact to substrate.

Belongs to the FGAMS family. As to quaternary structure, monomer. Part of the FGAM synthase complex composed of 1 PurL, 1 PurQ and 2 PurS subunits.

The protein localises to the cytoplasm. It catalyses the reaction N(2)-formyl-N(1)-(5-phospho-beta-D-ribosyl)glycinamide + L-glutamine + ATP + H2O = 2-formamido-N(1)-(5-O-phospho-beta-D-ribosyl)acetamidine + L-glutamate + ADP + phosphate + H(+). The protein operates within purine metabolism; IMP biosynthesis via de novo pathway; 5-amino-1-(5-phospho-D-ribosyl)imidazole from N(2)-formyl-N(1)-(5-phospho-D-ribosyl)glycinamide: step 1/2. Functionally, part of the phosphoribosylformylglycinamidine synthase complex involved in the purines biosynthetic pathway. Catalyzes the ATP-dependent conversion of formylglycinamide ribonucleotide (FGAR) and glutamine to yield formylglycinamidine ribonucleotide (FGAM) and glutamate. The FGAM synthase complex is composed of three subunits. PurQ produces an ammonia molecule by converting glutamine to glutamate. PurL transfers the ammonia molecule to FGAR to form FGAM in an ATP-dependent manner. PurS interacts with PurQ and PurL and is thought to assist in the transfer of the ammonia molecule from PurQ to PurL. The polypeptide is Phosphoribosylformylglycinamidine synthase subunit PurL (Novosphingobium aromaticivorans (strain ATCC 700278 / DSM 12444 / CCUG 56034 / CIP 105152 / NBRC 16084 / F199)).